Here is a 102-residue protein sequence, read N- to C-terminus: Small ribosomal subunit protein bS6 (102 aa).

It belongs to the bacterial ribosomal protein bS6 family.

In terms of biological role, binds together with bS18 to 16S ribosomal RNA. The sequence is that of Small ribosomal subunit protein bS6 from Solidesulfovibrio magneticus (strain ATCC 700980 / DSM 13731 / RS-1) (Desulfovibrio magneticus).